A 386-amino-acid polypeptide reads, in one-letter code: Zinc finger CCCH domain-containing protein 39 (386 aa).

Residues 1 to 90 (MDSSYSDSRP…SSSNPWMVPS (90 aa)) are disordered. Over residues 20–37 (WNQTQMIDSMANPMNNEQ) the composition is skewed to polar residues. Residues 43–58 (LSESQSQSQPSQQLQP) show a composition bias toward low complexity. Polar residues predominate over residues 72 to 85 (NPASSFPQPSSSNP). Residues 104-131 (FYKTRMCAKFRAGTCRNGELCNFAHGIE) form a C3H1-type 1 zinc finger. Residues 136-166 (PPSNWQEIVGPPPAGQDRERERERERERERP) are disordered. The segment covering 151–166 (QDRERERERERERERP) has biased composition (basic and acidic residues). 2 C3H1-type zinc fingers span residues 183 to 211 (ILRM…HEDL) and 269 to 297 (YWKT…HGQA).

This chain is Zinc finger CCCH domain-containing protein 39, found in Arabidopsis thaliana (Mouse-ear cress).